The primary structure comprises 249 residues: Triosephosphate isomerase (249 aa).

9–11 (NWK) provides a ligand contact to substrate. Histidine 94 (electrophile) is an active-site residue. Glutamate 166 functions as the Proton acceptor in the catalytic mechanism. Substrate-binding positions include glycine 172 and 232–233 (GG).

The protein belongs to the triosephosphate isomerase family. In terms of assembly, homodimer.

The protein resides in the cytoplasm. It carries out the reaction D-glyceraldehyde 3-phosphate = dihydroxyacetone phosphate. The protein operates within carbohydrate biosynthesis; gluconeogenesis. Its pathway is carbohydrate degradation; glycolysis; D-glyceraldehyde 3-phosphate from glycerone phosphate: step 1/1. Its function is as follows. Involved in the gluconeogenesis. Catalyzes stereospecifically the conversion of dihydroxyacetone phosphate (DHAP) to D-glyceraldehyde-3-phosphate (G3P). This is Triosephosphate isomerase from Xylella fastidiosa (strain 9a5c).